Consider the following 244-residue polypeptide: MILYPAIDLKDGECVRLKLGEMSEATVYNRDPAAQAKAFEEQGFEWLHVVDLNGAFAGASVNGAAVEAILKATRNPVQLGGGIRSLEQIEAWLERGLARVILGTVAVRDPALVREACGKFPGKIAVGIDARGGKVAVEGWAETSDLTAAELAKRFEGAGVAAIIYTDIDRDGVLTGINWEATIALADAVSIPIIASGGLASMADIERMVKPDAAKLEGAISGRALYDGRIDPKEALAMLRKARA.

D8 functions as the Proton acceptor in the catalytic mechanism. The active-site Proton donor is D129.

This sequence belongs to the HisA/HisF family.

It localises to the cytoplasm. It carries out the reaction 1-(5-phospho-beta-D-ribosyl)-5-[(5-phospho-beta-D-ribosylamino)methylideneamino]imidazole-4-carboxamide = 5-[(5-phospho-1-deoxy-D-ribulos-1-ylimino)methylamino]-1-(5-phospho-beta-D-ribosyl)imidazole-4-carboxamide. The protein operates within amino-acid biosynthesis; L-histidine biosynthesis; L-histidine from 5-phospho-alpha-D-ribose 1-diphosphate: step 4/9. The polypeptide is 1-(5-phosphoribosyl)-5-[(5-phosphoribosylamino)methylideneamino] imidazole-4-carboxamide isomerase (Chelativorans sp. (strain BNC1)).